We begin with the raw amino-acid sequence, 97 residues long: HssA/B-like protein 47 (97 aa).

The disordered stretch occupies residues 1–33 (MTLFSSISSISNPMTSSKSSIASFGSGTSMSSN).

It belongs to the hssA/B family.

The chain is HssA/B-like protein 47 (hssl47) from Dictyostelium discoideum (Social amoeba).